The sequence spans 92 residues: Small ribosomal subunit protein bS18 (92 aa).

Belongs to the bacterial ribosomal protein bS18 family. Part of the 30S ribosomal subunit. Forms a tight heterodimer with protein bS6.

In terms of biological role, binds as a heterodimer with protein bS6 to the central domain of the 16S rRNA, where it helps stabilize the platform of the 30S subunit. This Chlorobium chlorochromatii (strain CaD3) protein is Small ribosomal subunit protein bS18.